We begin with the raw amino-acid sequence, 354 residues long: Membrane progestin receptor beta (354 aa).

The Cytoplasmic portion of the chain corresponds to 1 to 75; that stretch reads MTTAILQRLS…FFSLFQKHNE (75 aa). Residues 76 to 96 traverse the membrane as a helical segment; sequence VVNVWTHLLAALAVLLRFWAF. The Extracellular portion of the chain corresponds to 97 to 111; that stretch reads VETEGLPWTSAHTLP. Residues 112-132 form a helical membrane-spanning segment; that stretch reads LLLYVLSSITYLTFSLLAHLL. Residues 133–174 lie on the Cytoplasmic side of the membrane; the sequence is QSKSELSHYTFYFVDYVGVSVYQYGSALVHFFYASDQAWYER. A helical membrane pass occupies residues 175–195; sequence FWLFFLPAAAFCGWLSCTGCC. Over 196 to 213 the chain is Extracellular; that stretch reads YAKYRYRRPYPVMRKVCQ. Residues 214 to 234 form a helical membrane-spanning segment; sequence VVPAGLAFILDISPVAHRVAL. The Cytoplasmic portion of the chain corresponds to 235 to 243; sequence CHLSGCQEQ. The chain crosses the membrane as a helical span at residues 244-264; that stretch reads AAWYHTLQIVFFLVSAYFFSC. The Extracellular segment spans residues 265–283; that stretch reads PVPEKYFPGSCDIVGHGHQ. Residues 284-304 form a helical membrane-spanning segment; that stretch reads IFHAFLSICTLSQLEAILLDY. The Cytoplasmic portion of the chain corresponds to 305–319; the sequence is KGRQEIFLHRHSPLS. A helical membrane pass occupies residues 320–340; the sequence is IYAACLSFFFLVACSGATAAL. Over 341-354 the chain is Extracellular; it reads LREKIKARLSKKDS.

The protein belongs to the ADIPOR family.

The protein localises to the cell membrane. Functionally, steroid membrane receptor. Binds progesterone. May be involved in oocyte maturation. The sequence is that of Membrane progestin receptor beta (PAQR8) from Sus scrofa (Pig).